The following is a 561-amino-acid chain: DNA ligase B (561 aa).

The active-site N6-AMP-lysine intermediate is the Lys125.

It belongs to the NAD-dependent DNA ligase family. LigB subfamily.

The enzyme catalyses NAD(+) + (deoxyribonucleotide)n-3'-hydroxyl + 5'-phospho-(deoxyribonucleotide)m = (deoxyribonucleotide)n+m + AMP + beta-nicotinamide D-nucleotide.. Functionally, catalyzes the formation of phosphodiester linkages between 5'-phosphoryl and 3'-hydroxyl groups in double-stranded DNA using NAD as a coenzyme and as the energy source for the reaction. This Salmonella heidelberg (strain SL476) protein is DNA ligase B.